Reading from the N-terminus, the 352-residue chain is MTSTMKLFTDHAEISVRERPPQRNNNNQEQDNSNRPAPRRLFGLNEKYNFDQPETTFDKLLHQICLGNYEQVDDKIINDSITLAALRKYSCEYKDLKPEKAPKLKNECMKQFAQPGQVVEIIGIDLPLDSSIDQDDLYDLKDDNDVIPVLRVYQSAQDARTKTTENKKDYILDTRVIPDNFAASLFLKSVLRAILLQIFSSLQNQLVKTDVATNPEFMRMSNAFASTRRGPFYNIASLVPALSYPDSRSVPLIVGFILTQENLSLLSLYSMIVTTKVSSTIMALYENNSSEEECEDSISAASCTNQSNVNNSDNIRMTITLPCGLTIAFFVYYRYTLFQRRVKCSTSILLSS.

A disordered region spans residues Met1–Arg40. Basic and acidic residues predominate over residues Phe8–Pro21. The segment covering Gln22–Pro36 has biased composition (low complexity). A helical transmembrane segment spans residues Met317–Tyr333.

The protein localises to the host cell membrane. This is an uncharacterized protein from Diadromus pulchellus idnoreovirus 1 (DpIRV-1).